The following is a 791-amino-acid chain: Ribosome biogenesis protein ERB1 (791 aa).

Polar residues predominate over residues 1–12 (MARKNSSLNGSE). 2 disordered regions span residues 1–60 (MARK…DDSD) and 68–87 (AEEE…SEEG). Composition is skewed to acidic residues over residues 25-60 (ESEL…DDSD) and 69-87 (EEEN…SEEG). A required for interaction with NOP7 region spans residues 254 to 372 (RFVPSKHEAK…LRKVPGYSES (119 aa)). Residues 372-408 (SVRERFERSLDLYLAPRVRKNKLNIDPESLIPELPST) are required for interaction with YTM1. 7 WD repeats span residues 424–463 (GHKG…EVYQ), 472–512 (NNDD…FEIE), 576–618 (TCRK…TQSP), 621–659 (KSKG…LIKK), 662–701 (PGAR…TPYK), 705–744 (YHEK…DLMK), and 760–791 (VNSL…LWTT).

It belongs to the WD repeat BOP1/ERB1 family. As to quaternary structure, component of the NOP7 complex, composed of ERB1, NOP7 and YTM1. The complex is held together by ERB1, which interacts with NOP7 via its N-terminal domain and with YTM1 via a high-affinity interaction between the seven-bladed beta-propeller domains of the 2 proteins. The NOP7 complex associates with the 66S pre-ribosome.

It localises to the nucleus. Its subcellular location is the nucleolus. The protein resides in the nucleoplasm. Component of the NOP7 complex, which is required for maturation of the 25S and 5.8S ribosomal RNAs and formation of the 60S ribosome. The polypeptide is Ribosome biogenesis protein ERB1 (Kluyveromyces lactis (strain ATCC 8585 / CBS 2359 / DSM 70799 / NBRC 1267 / NRRL Y-1140 / WM37) (Yeast)).